Here is a 542-residue protein sequence, read N- to C-terminus: Valine N-monooxygenase 1 (542 aa).

Residues 1 to 21 (MAMNVSTTIGLLNATSFASSS) lie on the Cytoplasmic side of the membrane. Residues 22-42 (SINTVKILFVTLFISIVSTIV) form a helical; Signal-anchor for type II membrane protein membrane-spanning segment. At 43 to 542 (KLQKSAANKE…LAPHLYPTSP (500 aa)) the chain is on the lumenal side. Asparagine 278 carries an N-linked (GlcNAc...) asparagine glycan. Residue cysteine 478 coordinates heme. An N-linked (GlcNAc...) asparagine glycan is attached at asparagine 506.

Belongs to the cytochrome P450 family. Heme serves as cofactor. Expressed in the epidermis, the next two cortex cell layers, the endodermis and the pericycle of leaf petioles. Strong expression around the laticifers among the phloem cells and in parenchymatic cells between the protoxylem and the metaxylem cells. In the leaves, preferentially expressed in the mesophyll cells adjacent to the epidermis.

The protein resides in the microsome membrane. It carries out the reaction L-valine + 2 reduced [NADPH--hemoprotein reductase] + 2 O2 = (E)-2-methylpropanal oxime + 2 oxidized [NADPH--hemoprotein reductase] + CO2 + 3 H2O + 2 H(+). The catalysed reaction is L-valine + reduced [NADPH--hemoprotein reductase] + O2 = N-hydroxy-L-valine + oxidized [NADPH--hemoprotein reductase] + H2O + 2 H(+). It catalyses the reaction N-hydroxy-L-valine + reduced [NADPH--hemoprotein reductase] + O2 = N,N-dihydroxy-L-valine + oxidized [NADPH--hemoprotein reductase] + H2O + H(+). The enzyme catalyses L-isoleucine + 2 reduced [NADPH--hemoprotein reductase] + 2 O2 = (1E,2S)-2-methylbutanal oxime + 2 oxidized [NADPH--hemoprotein reductase] + CO2 + 3 H2O + 2 H(+). It carries out the reaction L-isoleucine + reduced [NADPH--hemoprotein reductase] + O2 = N-hydroxy-L-isoleucine + oxidized [NADPH--hemoprotein reductase] + H2O + 2 H(+). The catalysed reaction is N-hydroxy-L-isoleucine + reduced [NADPH--hemoprotein reductase] + O2 = N,N-dihydroxy-L-isoleucine + oxidized [NADPH--hemoprotein reductase] + H2O + H(+). The protein operates within secondary metabolite biosynthesis. Its activity is regulated as follows. Inhibited by tetcyclasis but not by 1-aminobenzotriazole (ABT). In terms of biological role, involved in the biosynthesis of the cyanogenic glucosides linamarin and lotaustralin. Can use L-valine or L-isoleucine as substrate, but not L-leucine, L-phenylalanine, L-tyrosine, D-valine or D-isoleucine. Catalyzes multi-step reactions starting with two successive N-hydroxylations using L-valine and L-isoleucine as substrates leading to the formation of N,N-dihydroxy-L-valine and N,N-dihydroxy-L-isoleucine, respectively; following spontaneous reactions lead to the production of (E)-2-methylpropanal oxime and (1E,2S)-2-methylbutanal oxime, respectively. This is Valine N-monooxygenase 1 from Manihot esculenta (Cassava).